A 339-amino-acid chain; its full sequence is Ribosomal RNA small subunit methyltransferase H (339 aa).

S-adenosyl-L-methionine is bound by residues 56–58 (GGH), D76, F102, D123, and Q130. Disordered stretches follow at residues 274-309 (RHSR…KAEV) and 320-339 (LRVA…PQHS). The span at 325 to 339 (RTDTPYNTDPSPQHS) shows a compositional bias: polar residues.

The protein belongs to the methyltransferase superfamily. RsmH family.

It localises to the cytoplasm. The enzyme catalyses cytidine(1402) in 16S rRNA + S-adenosyl-L-methionine = N(4)-methylcytidine(1402) in 16S rRNA + S-adenosyl-L-homocysteine + H(+). Functionally, specifically methylates the N4 position of cytidine in position 1402 (C1402) of 16S rRNA. This Psychrobacter sp. (strain PRwf-1) protein is Ribosomal RNA small subunit methyltransferase H.